A 227-amino-acid polypeptide reads, in one-letter code: PKHD-type hydroxylase Bamb_4479 (227 aa).

One can recognise a Fe2OG dioxygenase domain in the interval Gln80–Ser179. 3 residues coordinate Fe cation: His98, Asp100, and His160. Position 170 (Arg170) interacts with 2-oxoglutarate.

Fe(2+) serves as cofactor. It depends on L-ascorbate as a cofactor.

This is PKHD-type hydroxylase Bamb_4479 from Burkholderia ambifaria (strain ATCC BAA-244 / DSM 16087 / CCUG 44356 / LMG 19182 / AMMD) (Burkholderia cepacia (strain AMMD)).